Here is a 407-residue protein sequence, read N- to C-terminus: Phosphopentomutase (407 aa).

Mn(2+) contacts are provided by Asp10, Asp306, His311, Asp347, His348, and His359.

The protein belongs to the phosphopentomutase family. Mn(2+) is required as a cofactor.

It is found in the cytoplasm. The enzyme catalyses 2-deoxy-alpha-D-ribose 1-phosphate = 2-deoxy-D-ribose 5-phosphate. It carries out the reaction alpha-D-ribose 1-phosphate = D-ribose 5-phosphate. The protein operates within carbohydrate degradation; 2-deoxy-D-ribose 1-phosphate degradation; D-glyceraldehyde 3-phosphate and acetaldehyde from 2-deoxy-alpha-D-ribose 1-phosphate: step 1/2. Its function is as follows. Isomerase that catalyzes the conversion of deoxy-ribose 1-phosphate (dRib-1-P) and ribose 1-phosphate (Rib-1-P) to deoxy-ribose 5-phosphate (dRib-5-P) and ribose 5-phosphate (Rib-5-P), respectively. The chain is Phosphopentomutase from Erwinia tasmaniensis (strain DSM 17950 / CFBP 7177 / CIP 109463 / NCPPB 4357 / Et1/99).